Here is a 206-residue protein sequence, read N- to C-terminus: Large ribosomal subunit protein uL4 (206 aa).

Residues 44 to 87 (KRQGTHATKTRGMKRGGGAKPWRQKGTGRARAGSTRSPLWRGGG) form a disordered region.

Belongs to the universal ribosomal protein uL4 family. In terms of assembly, part of the 50S ribosomal subunit.

One of the primary rRNA binding proteins, this protein initially binds near the 5'-end of the 23S rRNA. It is important during the early stages of 50S assembly. It makes multiple contacts with different domains of the 23S rRNA in the assembled 50S subunit and ribosome. Functionally, forms part of the polypeptide exit tunnel. The sequence is that of Large ribosomal subunit protein uL4 from Maridesulfovibrio salexigens (strain ATCC 14822 / DSM 2638 / NCIMB 8403 / VKM B-1763) (Desulfovibrio salexigens).